A 113-amino-acid polypeptide reads, in one-letter code: Protein FPV195 (113 aa).

This sequence belongs to the poxviruses A31 family.

This Vertebrata (FPV) protein is Protein FPV195.